The following is a 273-amino-acid chain: Large ribosomal subunit protein uL2 (273 aa).

The disordered stretch occupies residues 228–273 (VDHPHGGGEGKTSGGRHPVTPWGFPTKGKKTRKNKRTSKFIVKKRK). Over residues 254–273 (KGKKTRKNKRTSKFIVKKRK) the composition is skewed to basic residues.

It belongs to the universal ribosomal protein uL2 family. Part of the 50S ribosomal subunit. Forms a bridge to the 30S subunit in the 70S ribosome.

In terms of biological role, one of the primary rRNA binding proteins. Required for association of the 30S and 50S subunits to form the 70S ribosome, for tRNA binding and peptide bond formation. It has been suggested to have peptidyltransferase activity; this is somewhat controversial. Makes several contacts with the 16S rRNA in the 70S ribosome. This Rickettsia rickettsii (strain Iowa) protein is Large ribosomal subunit protein uL2.